The following is a 427-amino-acid chain: WD repeat and SOCS box-containing protein 1 (427 aa).

WD repeat units follow at residues 129 to 170 (SRSI…LLLN), 173 to 213 (DHTD…NMVK), 217 to 256 (GHPN…LIRK), 259 to 298 (GHHN…ILLE), and 314 to 353 (ANDR…PQAV). The region spanning 379-427 (SVHFWECPRSIASLQHLCRMALRRVKTTQQVEALPVPMPLRDFLTYRVV) is the SOCS box domain.

In terms of assembly, component of a probable ECS E3 ubiquitin-protein ligase complex that contains the Elongin BC complex.

Its pathway is protein modification; protein ubiquitination. Its function is as follows. Probable substrate-recognition component of a SCF-like ECS (Elongin-Cullin-SOCS-box protein) E3 ubiquitin-protein ligase complex which mediates the ubiquitination and subsequent proteasomal degradation of target proteins. In Takifugu rubripes (Japanese pufferfish), this protein is WD repeat and SOCS box-containing protein 1 (wsb1).